A 435-amino-acid chain; its full sequence is GTPase Der (435 aa).

EngA-type G domains are found at residues 4–167 (PTLA…PSED) and 175–350 (IKFS…ENQT). Residues 10–17 (GRPNVGKS), 57–61 (DTGGI), 119–122 (NKVD), 181–188 (GRPNVGKS), 228–232 (DTAGI), and 293–296 (NKWD) each bind GTP. One can recognise a KH-like domain in the interval 351–435 (RRIQSSVLND…PIHIIARKRK (85 aa)).

This sequence belongs to the TRAFAC class TrmE-Era-EngA-EngB-Septin-like GTPase superfamily. EngA (Der) GTPase family. In terms of assembly, associates with the 50S ribosomal subunit.

GTPase that plays an essential role in the late steps of ribosome biogenesis. The chain is GTPase Der from Lacticaseibacillus paracasei (strain ATCC 334 / BCRC 17002 / CCUG 31169 / CIP 107868 / KCTC 3260 / NRRL B-441) (Lactobacillus paracasei).